A 300-amino-acid polypeptide reads, in one-letter code: Merozoite surface protein 2 (300 aa).

Positions 1–20 (MKVIKTLSIINFFIFVTFNI) are cleaved as a signal peptide. N-linked (GlcNAc...) asparagine glycosylation is found at N22 and N36. The tract at residues 44–226 (EESKPPTGAV…EQTESPELQS (183 aa)) is polymorphic region. One copy of the 1; inverted repeat lies at 51-58 (GAVAGSGA). The segment at 51–74 (GAVAGSGAGAGSGAGAVAGSGAGA) is 7 X 8 AA tandem repeats of G-S-G-A-G-A-V-A. Repeat copies occupy residues 61–68 (GSGAGAVA), 69–76 (GSGAGAVA), 77–84 (GSGAGAVA), 85–92 (GSGAGAVA), and 93–100 (GSGAGAVA). The 7; inverted repeat unit spans residues 103 to 110 (GAVAGSGA). The disordered stretch occupies residues 111-261 (GNGANPGADA…DSQKECTDGN (151 aa)). Residues 124–148 (PSTPATTTTTTTTNDAEASTSTSSE) show a composition bias toward low complexity. Positions 149 to 165 (NRNHNNAETNPKGKGEV) are enriched in basic and acidic residues. Composition is skewed to polar residues over residues 167–193 (KPNQ…NVPR) and 200–228 (KSPT…QSAP). Residue N177 is glycosylated (N-linked (GlcNAc...) asparagine). N249 is a glycosylation site (N-linked (GlcNAc...) asparagine). An intrachain disulfide couples C257 to C265. N-linked (GlcNAc...) asparagine glycosylation is found at N273 and N274. N274 carries GPI-anchor amidated asparagine lipidation. Positions 275–300 (SSNIASINKFVVLISATLVLSFAIFI) are cleaved as a propeptide — removed in mature form.

The protein resides in the cell membrane. In terms of biological role, may play a role in the merozoite attachment to the erythrocyte. This chain is Merozoite surface protein 2, found in Plasmodium falciparum (isolate mad71 / Papua New Guinea).